Consider the following 269-residue polypeptide: Indole-3-glycerol phosphate synthase (269 aa).

Belongs to the TrpC family.

The catalysed reaction is 1-(2-carboxyphenylamino)-1-deoxy-D-ribulose 5-phosphate + H(+) = (1S,2R)-1-C-(indol-3-yl)glycerol 3-phosphate + CO2 + H2O. The protein operates within amino-acid biosynthesis; L-tryptophan biosynthesis; L-tryptophan from chorismate: step 4/5. This is Indole-3-glycerol phosphate synthase from Saccharopolyspora erythraea (strain ATCC 11635 / DSM 40517 / JCM 4748 / NBRC 13426 / NCIMB 8594 / NRRL 2338).